The sequence spans 379 residues: Putative zinc metalloprotease BMEI0829 (379 aa).

Histidine 33 contributes to the Zn(2+) binding site. Glutamate 34 is a catalytic residue. Histidine 37 provides a ligand contact to Zn(2+). The next 4 membrane-spanning stretches (helical) occupy residues 39-61 (LVARWCGIGAQAFSIGFGPELLG), 122-144 (VFAGPAFNIILTIAIFSVFFALY), 305-327 (FDWLIQLMAMLSIGIGLLNLFPL), and 355-377 (IFYRIGFLLVMGFMGFVLFNDLF). The 76-residue stretch at 133 to 208 (TIAIFSVFFA…LNFTVERDGK (76 aa)) folds into the PDZ domain.

It belongs to the peptidase M50B family. It depends on Zn(2+) as a cofactor.

Its subcellular location is the cell inner membrane. This chain is Putative zinc metalloprotease BMEI0829, found in Brucella melitensis biotype 1 (strain ATCC 23456 / CCUG 17765 / NCTC 10094 / 16M).